We begin with the raw amino-acid sequence, 343 residues long: Probable dual-specificity RNA methyltransferase RlmN (343 aa).

Glu-83 (proton acceptor) is an active-site residue. The Radical SAM core domain occupies 89-323; it reads YLDRKTICVS…VSVRRSRGKD (235 aa). Cys-96 and Cys-328 are oxidised to a cystine. [4Fe-4S] cluster contacts are provided by Cys-103, Cys-107, and Cys-110. Residues 153–154, Ser-185, 209–211, and Asn-285 each bind S-adenosyl-L-methionine; these read GE and SLH. The S-methylcysteine intermediate role is filled by Cys-328.

Belongs to the radical SAM superfamily. RlmN family. [4Fe-4S] cluster is required as a cofactor.

The protein localises to the cytoplasm. The enzyme catalyses adenosine(2503) in 23S rRNA + 2 reduced [2Fe-2S]-[ferredoxin] + 2 S-adenosyl-L-methionine = 2-methyladenosine(2503) in 23S rRNA + 5'-deoxyadenosine + L-methionine + 2 oxidized [2Fe-2S]-[ferredoxin] + S-adenosyl-L-homocysteine. The catalysed reaction is adenosine(37) in tRNA + 2 reduced [2Fe-2S]-[ferredoxin] + 2 S-adenosyl-L-methionine = 2-methyladenosine(37) in tRNA + 5'-deoxyadenosine + L-methionine + 2 oxidized [2Fe-2S]-[ferredoxin] + S-adenosyl-L-homocysteine. Functionally, specifically methylates position 2 of adenine 2503 in 23S rRNA and position 2 of adenine 37 in tRNAs. This chain is Probable dual-specificity RNA methyltransferase RlmN, found in Deinococcus deserti (strain DSM 17065 / CIP 109153 / LMG 22923 / VCD115).